Here is a 492-residue protein sequence, read N- to C-terminus: Probable protein phosphatase 2C 33 (492 aa).

A disordered region spans residues 1–46; sequence MGSCLSAESRSPRPGSPCSPAFSVRKRKNSKKRPGSRNSSFDYRRE. The span at 24-35 shows a compositional bias: basic residues; it reads VRKRKNSKKRPG. The 330-residue stretch at 64 to 393 folds into the PPM-type phosphatase domain; the sequence is VACIYTQQGK…DDCAAVCLYL (330 aa). 4 residues coordinate Mn(2+): D100, G101, D338, and D384. A disordered region spans residues 406–468; that stretch reads SISKLEDGEE…ADNLDSEPGT (63 aa). Positions 412 to 427 are enriched in acidic residues; that stretch reads DGEEEELKATTEDDDA. Residues 441 to 460 show a composition bias toward basic and acidic residues; it reads SGKEIALDESETEKLIKEAD.

It belongs to the PP2C family. Mg(2+) is required as a cofactor. Mn(2+) serves as cofactor.

It catalyses the reaction O-phospho-L-seryl-[protein] + H2O = L-seryl-[protein] + phosphate. It carries out the reaction O-phospho-L-threonyl-[protein] + H2O = L-threonyl-[protein] + phosphate. The sequence is that of Probable protein phosphatase 2C 33 (PPC6-1) from Arabidopsis thaliana (Mouse-ear cress).